Here is a 253-residue protein sequence, read N- to C-terminus: 5'-nucleotidase SurE (253 aa).

A divalent metal cation-binding residues include aspartate 8, aspartate 9, serine 39, and asparagine 96.

The protein belongs to the SurE nucleotidase family. Requires a divalent metal cation as cofactor.

The protein localises to the cytoplasm. It catalyses the reaction a ribonucleoside 5'-phosphate + H2O = a ribonucleoside + phosphate. In terms of biological role, nucleotidase that shows phosphatase activity on nucleoside 5'-monophosphates. The sequence is that of 5'-nucleotidase SurE from Rhodopirellula baltica (strain DSM 10527 / NCIMB 13988 / SH1).